A 294-amino-acid polypeptide reads, in one-letter code: Porphobilinogen deaminase (294 aa).

Cysteine 232 is subject to S-(dipyrrolylmethanemethyl)cysteine.

This sequence belongs to the HMBS family. In terms of assembly, monomer. Dipyrromethane is required as a cofactor.

The enzyme catalyses 4 porphobilinogen + H2O = hydroxymethylbilane + 4 NH4(+). It participates in porphyrin-containing compound metabolism; protoporphyrin-IX biosynthesis; coproporphyrinogen-III from 5-aminolevulinate: step 2/4. Its function is as follows. Tetrapolymerization of the monopyrrole PBG into the hydroxymethylbilane pre-uroporphyrinogen in several discrete steps. The polypeptide is Porphobilinogen deaminase (Corynebacterium diphtheriae (strain ATCC 700971 / NCTC 13129 / Biotype gravis)).